Here is a 378-residue protein sequence, read N- to C-terminus: uncharacterized protein (378 aa).

Zn(2+) contacts are provided by Cys-38, His-60, Cys-90, Cys-93, Cys-96, and Cys-104.

It belongs to the zinc-containing alcohol dehydrogenase family. Class-III subfamily. The cofactor is Zn(2+).

This is an uncharacterized protein from Bacillus subtilis (strain 168).